The primary structure comprises 124 residues: Large ribosomal subunit protein bL12 (124 aa).

The interval 99–124 (KEGMNKEDAEKAKADLEAAGAKVELK) is disordered. The span at 101–114 (GMNKEDAEKAKADL) shows a compositional bias: basic and acidic residues. Low complexity predominate over residues 115–124 (EAAGAKVELK).

Belongs to the bacterial ribosomal protein bL12 family. As to quaternary structure, homodimer. Part of the ribosomal stalk of the 50S ribosomal subunit. Forms a multimeric L10(L12)X complex, where L10 forms an elongated spine to which 2 to 4 L12 dimers bind in a sequential fashion. Binds GTP-bound translation factors.

Forms part of the ribosomal stalk which helps the ribosome interact with GTP-bound translation factors. Is thus essential for accurate translation. The protein is Large ribosomal subunit protein bL12 of Campylobacter hominis (strain ATCC BAA-381 / DSM 21671 / CCUG 45161 / LMG 19568 / NCTC 13146 / CH001A).